The chain runs to 169 residues: Putative tRNA (cytidine(34)-2'-O)-methyltransferase (169 aa).

The S-adenosyl-L-methionine site is built by Ile-79, Gly-104, Ile-125, and Ser-133.

The protein belongs to the class IV-like SAM-binding methyltransferase superfamily. RNA methyltransferase TrmH family. TrmL subfamily.

It is found in the cytoplasm. The enzyme catalyses cytidine(34) in tRNA + S-adenosyl-L-methionine = 2'-O-methylcytidine(34) in tRNA + S-adenosyl-L-homocysteine + H(+). It catalyses the reaction 5-carboxymethylaminomethyluridine(34) in tRNA(Leu) + S-adenosyl-L-methionine = 5-carboxymethylaminomethyl-2'-O-methyluridine(34) in tRNA(Leu) + S-adenosyl-L-homocysteine + H(+). Functionally, could methylate the ribose at the nucleotide 34 wobble position in tRNA. The protein is Putative tRNA (cytidine(34)-2'-O)-methyltransferase of Listeria innocua serovar 6a (strain ATCC BAA-680 / CLIP 11262).